Reading from the N-terminus, the 633-residue chain is Mitochondrial Rho GTPase 1 (633 aa).

Residues 1–170 (MATVRICVCG…FFLCQKAVTH (170 aa)) form the Miro 1 domain. At 1–603 (MATVRICVCG…PRSEEDVEGK (603 aa)) the chain is on the cytoplasmic side. GTP contacts are provided by residues 10 to 17 (GDEGTGKS), 59 to 63 (DTSAL), and 115 to 118 (NKSD). 2 consecutive EF-hand domains span residues 186 to 221 (AAVAALQRIFYLSDKDRDGYLSDKELEDFQMRCFEK) and 306 to 341 (EGYRFFVNLFLLSDKDNDGGLNDAELASLFAPTPGL). Ca(2+) contacts are provided by Asp199, Asp201, Asp203, Tyr205, Glu210, Asp319, Asp321, Asp323, and Glu330. A disordered region spans residues 398–418 (NPSTTAALKVTRPRKRRKRPG). Residues 408–418 (TRPRKRRKRPG) are compositionally biased toward basic residues. Residues 422 to 588 (RNVVLGHVLG…FVHIAEAAME (167 aa)) enclose the Miro 2 domain. GTP-binding positions include 431–438 (GPPGSGKS), 467–471 (ELPGG), and 537–540 (LKAD). The chain crosses the membrane as a helical; Anchor for type IV membrane protein span at residues 604-624 (WMAWGIALGAVVCAGAAAVMI). Over 625–633 (WRRVSGSGT) the chain is Mitochondrial intermembrane.

This sequence belongs to the mitochondrial Rho GTPase family.

It localises to the mitochondrion outer membrane. Its function is as follows. Mitochondrial GTPase involved in mitochondrial trafficking. Probably involved in control of anterograde transport of mitochondria and their subcellular distribution. This chain is Mitochondrial Rho GTPase 1 (gem1), found in Aspergillus oryzae (strain ATCC 42149 / RIB 40) (Yellow koji mold).